The primary structure comprises 339 residues: MLELFFEYIFPLIIIALKVVAITTPLILCVAYLTYAERRVIGLMQLRRGPNVVGPFGLLQPIADAVKLLFKEPIIPTNSDKILFILAPMITFILSLIGWAVIPFAKGVVLADINVGVLYILAISSLSVYGIIIAGWASNSKYAFLGAIRSSAQMISYEVSMGLVIITVLLTTGTLNLSEIIEAQRTMPWWIDLMLLPMGVVFFISVLAETNRLPFDLPEAESELVAGYNVEYSSMGFALFFLGEYANMILVSAMTTTFFLGGYLPPFNISWLDCIPGFFWFVFKVGFLLFCFLWIRATLPRYRYDQLMRLGWKVFLPLTLFWVVLVSSVLVYTDNLPSI.

A run of 9 helical transmembrane segments spans residues 9-29 (IFPL…LILC), 50-70 (PNVV…KLLF), 82-102 (ILFI…WAVI), 115-135 (VGVL…IIAG), 161-181 (MGLV…SEII), 187-207 (MPWW…ISVL), 235-255 (MGFA…SAMT), 275-295 (IPGF…FLWI), and 311-331 (GWKV…SVLV).

This sequence belongs to the complex I subunit 1 family. NDH-1 is composed of 14 different subunits. Subunits NuoA, H, J, K, L, M, N constitute the membrane sector of the complex.

It localises to the cell inner membrane. It catalyses the reaction a quinone + NADH + 5 H(+)(in) = a quinol + NAD(+) + 4 H(+)(out). Functionally, NDH-1 shuttles electrons from NADH, via FMN and iron-sulfur (Fe-S) centers, to quinones in the respiratory chain. The immediate electron acceptor for the enzyme in this species is believed to be ubiquinone. Couples the redox reaction to proton translocation (for every two electrons transferred, four hydrogen ions are translocated across the cytoplasmic membrane), and thus conserves the redox energy in a proton gradient. This subunit may bind ubiquinone. The sequence is that of NADH-quinone oxidoreductase subunit H from Rickettsia peacockii (strain Rustic).